We begin with the raw amino-acid sequence, 887 residues long: Transportin-2 (887 aa).

HEAT repeat units lie at residues 9-36 (GLQQ…DKLK), 41-79 (FPDF…AHYQ), 88-121 (FIKQ…KGEL), 127-164 (LLPQ…LDSD), 171-201 (NIMI…QFIM), 214-241 (FIEH…VMLL), 253-280 (HSII…FWLT), 296-386 (VQLI…LANV), 394-422 (HLLP…GAIA), 434-461 (PELI…TLSR), 475-508 (LKPL…EEEA), 516-549 (LSYI…ADSV), 557-595 (EYIQ…TALQ), 603-654 (EPVY…GLGG), 665-696 (IMTL…KACF), 704-737 (AEFM…MQMG), 745-780 (QMVL…YVCP), 788-821 (QQFI…IGVN), 830-861 (IFFC…KDQV), and 864-884 (ENWQ…LAAF). One can recognise an Importin N-terminal domain in the interval 31-99 (VQDKLKQLNQ…KQECLNNIGD (69 aa)). A disordered region spans residues 344 to 363 (TLTHEAERPDSSEDAEDDDD). Lys-852 is subject to N6-acetyllysine.

The protein belongs to the importin beta family. Importin beta-2 subfamily.

It is found in the cytoplasm. It localises to the nucleus. Functionally, probably functions in nuclear protein import as nuclear transport receptor. Serves as receptor for nuclear localization signals (NLS) in cargo substrates. Is thought to mediate docking of the importin/substrate complex to the nuclear pore complex (NPC) through binding to nucleoporin and the complex is subsequently translocated through the pore by an energy requiring, Ran-dependent mechanism. At the nucleoplasmic side of the NPC, Ran binds to the importin, the importin/substrate complex dissociates and importin is re-exported from the nucleus to the cytoplasm where GTP hydrolysis releases Ran. The directionality of nuclear import is thought to be conferred by an asymmetric distribution of the GTP- and GDP-bound forms of Ran between the cytoplasm and nucleus. The chain is Transportin-2 (Tnpo2) from Mus musculus (Mouse).